Consider the following 67-residue polypeptide: MFTMKKSMLLLFFLGTISLSLCEQERNADEEERRDEEVAKMEEIKRGLLSGILGAGKNIVCGLSGLC.

The first 22 residues, 1–22, serve as a signal peptide directing secretion; that stretch reads MFTMKKSMLLLFFLGTISLSLC. The propeptide occupies 23 to 46; sequence EQERNADEEERRDEEVAKMEEIKR. Residues Cys61 and Cys67 are joined by a disulfide bond.

Expressed by the skin glands.

The protein resides in the secreted. Antimicrobial peptide active at least against the Gram-positive bacterium S.aureus but with otherwise unclear activity spectrum. Lacks hemolytic activity against rabbit or human erythrocytes. The sequence is that of Nigrocin-2GRc from Odorrana grahami (Yunnanfu frog).